The following is a 347-amino-acid chain: sn-1 oleoyl-lipid 12-desaturase (347 aa).

The next 2 membrane-spanning stretches (helical) occupy residues 41–63 (AWSR…AIAP) and 67–85 (LLPV…FVIG). The short motif at 86 to 90 (HDCGH) is the Histidine box-1 element. The helical transmembrane segment at 98 to 118 (WVNNLVGHLAFLPLIYPFHSW) threads the bilayer. The Histidine box-2 motif lies at 122-126 (HNHHH). 3 helical membrane passes run 164–184 (LWWL…FAFE), 196–216 (LFVI…LGVW), and 218–238 (VVKF…TFTL). The Histidine box-3 signature appears at 286–290 (HHLST).

The protein belongs to the fatty acid desaturase type 2 family. Fe(2+) serves as cofactor.

The protein resides in the membrane. The enzyme catalyses a 1-[(9Z)-octadecenoyl]-2-acyl-glycerolipid + 2 reduced [2Fe-2S]-[ferredoxin] + O2 + 2 H(+) = a 1-[(9Z,12Z)-octadecdienoyl]-2-acyl-glycerolipid + 2 oxidized [2Fe-2S]-[ferredoxin] + 2 H2O. The protein operates within lipid metabolism; polyunsaturated fatty acid biosynthesis. Desaturase involved in fatty acid biosynthesis. Introduces a double bond at carbon 12 of oleoyl groups (18:1) attached to the sn-1 position of the glycerol moiety of membrane glycerolipids. Can also efficiently catalyze the desaturation of palmitoleic acid (16:1) in vitro. The polypeptide is sn-1 oleoyl-lipid 12-desaturase (Picosynechococcus sp. (strain ATCC 27264 / PCC 7002 / PR-6) (Agmenellum quadruplicatum)).